A 282-amino-acid chain; its full sequence is Nicotianamine synthase-like 5 protein (282 aa).

It belongs to the nicotianamine synthase (NAS)-like family.

The chain is Nicotianamine synthase-like 5 protein (NAS5) from Hordeum vulgare (Barley).